A 417-amino-acid chain; its full sequence is Gamma-glutamyl phosphate reductase (417 aa).

This sequence belongs to the gamma-glutamyl phosphate reductase family.

It localises to the cytoplasm. The catalysed reaction is L-glutamate 5-semialdehyde + phosphate + NADP(+) = L-glutamyl 5-phosphate + NADPH + H(+). Its pathway is amino-acid biosynthesis; L-proline biosynthesis; L-glutamate 5-semialdehyde from L-glutamate: step 2/2. In terms of biological role, catalyzes the NADPH-dependent reduction of L-glutamate 5-phosphate into L-glutamate 5-semialdehyde and phosphate. The product spontaneously undergoes cyclization to form 1-pyrroline-5-carboxylate. In Shigella boydii serotype 18 (strain CDC 3083-94 / BS512), this protein is Gamma-glutamyl phosphate reductase.